We begin with the raw amino-acid sequence, 387 residues long: Xylose isomerase (387 aa).

Residues H53 and D56 contribute to the active site. 7 residues coordinate Mg(2+): E180, E216, H219, D244, D254, D256, and D286.

It belongs to the xylose isomerase family. Homotetramer. Mg(2+) is required as a cofactor.

Its subcellular location is the cytoplasm. The enzyme catalyses alpha-D-xylose = alpha-D-xylulofuranose. The polypeptide is Xylose isomerase (xylA) (Thermus thermophilus (strain ATCC 27634 / DSM 579 / HB8)).